The following is a 493-amino-acid chain: tRNA(Ile)-lysidine synthase (493 aa).

26-31 (SGGSDS) lines the ATP pocket.

Belongs to the tRNA(Ile)-lysidine synthase family.

The protein localises to the cytoplasm. It carries out the reaction cytidine(34) in tRNA(Ile2) + L-lysine + ATP = lysidine(34) in tRNA(Ile2) + AMP + diphosphate + H(+). In terms of biological role, ligates lysine onto the cytidine present at position 34 of the AUA codon-specific tRNA(Ile) that contains the anticodon CAU, in an ATP-dependent manner. Cytidine is converted to lysidine, thus changing the amino acid specificity of the tRNA from methionine to isoleucine. This Bartonella henselae (strain ATCC 49882 / DSM 28221 / CCUG 30454 / Houston 1) (Rochalimaea henselae) protein is tRNA(Ile)-lysidine synthase.